A 364-amino-acid chain; its full sequence is UDP-N-acetylglucosamine--N-acetylmuramyl-(pentapeptide) pyrophosphoryl-undecaprenol N-acetylglucosamine transferase (364 aa).

UDP-N-acetyl-alpha-D-glucosamine contacts are provided by residues 13–15 (TGG), N125, R165, S192, and Q293.

This sequence belongs to the glycosyltransferase 28 family. MurG subfamily.

The protein localises to the cell inner membrane. It catalyses the reaction di-trans,octa-cis-undecaprenyl diphospho-N-acetyl-alpha-D-muramoyl-L-alanyl-D-glutamyl-meso-2,6-diaminopimeloyl-D-alanyl-D-alanine + UDP-N-acetyl-alpha-D-glucosamine = di-trans,octa-cis-undecaprenyl diphospho-[N-acetyl-alpha-D-glucosaminyl-(1-&gt;4)]-N-acetyl-alpha-D-muramoyl-L-alanyl-D-glutamyl-meso-2,6-diaminopimeloyl-D-alanyl-D-alanine + UDP + H(+). It functions in the pathway cell wall biogenesis; peptidoglycan biosynthesis. Functionally, cell wall formation. Catalyzes the transfer of a GlcNAc subunit on undecaprenyl-pyrophosphoryl-MurNAc-pentapeptide (lipid intermediate I) to form undecaprenyl-pyrophosphoryl-MurNAc-(pentapeptide)GlcNAc (lipid intermediate II). In Cereibacter sphaeroides (strain ATCC 17025 / ATH 2.4.3) (Rhodobacter sphaeroides), this protein is UDP-N-acetylglucosamine--N-acetylmuramyl-(pentapeptide) pyrophosphoryl-undecaprenol N-acetylglucosamine transferase.